Reading from the N-terminus, the 219-residue chain is Redox-sensing transcriptional repressor Rex (219 aa).

The segment at residues 18 to 57 (LYYRFIQSLYNSGKLRVSSAELSEAVKVDSATIRRDFSYF) is a DNA-binding region (H-T-H motif). An NAD(+)-binding site is contributed by 92 to 97 (GVGHLG).

This sequence belongs to the transcriptional regulatory Rex family. Homodimer.

It is found in the cytoplasm. Modulates transcription in response to changes in cellular NADH/NAD(+) redox state. The protein is Redox-sensing transcriptional repressor Rex of Exiguobacterium sibiricum (strain DSM 17290 / CCUG 55495 / CIP 109462 / JCM 13490 / 255-15).